The sequence spans 614 residues: Threonine--tRNA ligase (614 aa).

Residues 1–138 (MRILTIHARK…PLSELSKTIR (138 aa)) are editing domain. Catalytic stretches follow at residues 195 to 492 (NRVN…PYIP) and 196 to 492 (RVND…PYIP). Residues Cys289, His340, and His461 each contribute to the Zn(2+) site.

This sequence belongs to the class-II aminoacyl-tRNA synthetase family. In terms of assembly, homodimer. Zn(2+) is required as a cofactor.

The protein resides in the cytoplasm. It catalyses the reaction tRNA(Thr) + L-threonine + ATP = L-threonyl-tRNA(Thr) + AMP + diphosphate + H(+). Its function is as follows. Catalyzes the attachment of threonine to tRNA(Thr) in a two-step reaction: L-threonine is first activated by ATP to form Thr-AMP and then transferred to the acceptor end of tRNA(Thr). Also edits incorrectly charged L-seryl-tRNA(Thr). The protein is Threonine--tRNA ligase of Staphylothermus marinus (strain ATCC 43588 / DSM 3639 / JCM 9404 / F1).